The sequence spans 191 residues: Phosphoheptose isomerase (191 aa).

In terms of domain architecture, SIS spans 37–191; sequence IAESFKQDGK…IIQLIEKEME (155 aa). 52-54 is a binding site for substrate; sequence NGG. Zn(2+)-binding residues include His-61 and Glu-65. Residues Glu-65, 93 to 94, 119 to 121, Ser-124, and Gln-172 each bind substrate; these read ND and STS. Residues Gln-172 and His-180 each contribute to the Zn(2+) site.

The protein belongs to the SIS family. GmhA subfamily. In terms of assembly, homotetramer. Zn(2+) is required as a cofactor.

It localises to the cytoplasm. It carries out the reaction 2 D-sedoheptulose 7-phosphate = D-glycero-alpha-D-manno-heptose 7-phosphate + D-glycero-beta-D-manno-heptose 7-phosphate. The protein operates within carbohydrate biosynthesis; D-glycero-D-manno-heptose 7-phosphate biosynthesis; D-glycero-alpha-D-manno-heptose 7-phosphate and D-glycero-beta-D-manno-heptose 7-phosphate from sedoheptulose 7-phosphate: step 1/1. It functions in the pathway bacterial outer membrane biogenesis; LPS core biosynthesis. Catalyzes the isomerization of sedoheptulose 7-phosphate in D-glycero-D-manno-heptose 7-phosphate. In Vibrio vulnificus (strain CMCP6), this protein is Phosphoheptose isomerase.